The primary structure comprises 173 residues: Ribosome maturation factor RimM (173 aa).

One can recognise a PRC barrel domain in the interval 78–157 (EEEFYLADLI…VLVVPPEEVE (80 aa)). Residues 152–173 (PPEEVEAQEPPEKDAGGDEPSP) form a disordered region.

Belongs to the RimM family. Binds ribosomal protein uS19.

The protein resides in the cytoplasm. Its function is as follows. An accessory protein needed during the final step in the assembly of 30S ribosomal subunit, possibly for assembly of the head region. Essential for efficient processing of 16S rRNA. May be needed both before and after RbfA during the maturation of 16S rRNA. It has affinity for free ribosomal 30S subunits but not for 70S ribosomes. This Beijerinckia indica subsp. indica (strain ATCC 9039 / DSM 1715 / NCIMB 8712) protein is Ribosome maturation factor RimM.